Here is a 222-residue protein sequence, read N- to C-terminus: ATP synthase F(0) complex subunit a (222 aa).

Transmembrane regions (helical) follow at residues 8–28 (FFYV…ILLP), 64–84 (WSLM…LGLL), 93–113 (QLTV…VPGF), 127–147 (QGTP…SLLI), 160–180 (ITAG…LSSI), and 197–219 (ILEL…LYLH).

It belongs to the ATPase A chain family. As to quaternary structure, component of the ATP synthase complex composed at least of ATP5F1A/subunit alpha, ATP5F1B/subunit beta, ATP5MC1/subunit c (homooctomer), MT-ATP6/subunit a, MT-ATP8/subunit 8, ATP5ME/subunit e, ATP5MF/subunit f, ATP5MG/subunit g, ATP5MK/subunit k, ATP5MJ/subunit j, ATP5F1C/subunit gamma, ATP5F1D/subunit delta, ATP5F1E/subunit epsilon, ATP5PF/subunit F6, ATP5PB/subunit b, ATP5PD/subunit d, ATP5PO/subunit OSCP. ATP synthase complex consists of a soluble F(1) head domain (subunits alpha(3) and beta(3)) - the catalytic core - and a membrane F(0) domain - the membrane proton channel (subunits c, a, 8, e, f, g, k and j). These two domains are linked by a central stalk (subunits gamma, delta, and epsilon) rotating inside the F1 region and a stationary peripheral stalk (subunits F6, b, d, and OSCP). Interacts with DNAJC30; interaction is direct.

The protein localises to the mitochondrion inner membrane. The enzyme catalyses H(+)(in) = H(+)(out). Subunit a, of the mitochondrial membrane ATP synthase complex (F(1)F(0) ATP synthase or Complex V) that produces ATP from ADP in the presence of a proton gradient across the membrane which is generated by electron transport complexes of the respiratory chain. ATP synthase complex consist of a soluble F(1) head domain - the catalytic core - and a membrane F(1) domain - the membrane proton channel. These two domains are linked by a central stalk rotating inside the F(1) region and a stationary peripheral stalk. During catalysis, ATP synthesis in the catalytic domain of F(1) is coupled via a rotary mechanism of the central stalk subunits to proton translocation. With the subunit c (ATP5MC1), forms the proton-conducting channel in the F(0) domain, that contains two crucial half-channels (inlet and outlet) that facilitate proton movement from the mitochondrial intermembrane space (IMS) into the matrix. Protons are taken up via the inlet half-channel and released through the outlet half-channel, following a Grotthuss mechanism. This is ATP synthase F(0) complex subunit a from Loxodonta africana (African elephant).